The primary structure comprises 204 residues: Large ribosomal subunit protein eL15B (204 aa).

A disordered region spans residues 165–185 (TATGKKSRGINKGHKFNNTKA). Over residues 169–185 (KKSRGINKGHKFNNTKA) the composition is skewed to basic residues.

The protein belongs to the eukaryotic ribosomal protein eL15 family. Component of the large ribosomal subunit (LSU). Mature yeast ribosomes consist of a small (40S) and a large (60S) subunit. The 40S small subunit contains 1 molecule of ribosomal RNA (18S rRNA) and 33 different proteins (encoded by 57 genes). The large 60S subunit contains 3 rRNA molecules (25S, 5.8S and 5S rRNA) and 46 different proteins (encoded by 81 genes).

The protein localises to the cytoplasm. Functionally, component of the ribosome, a large ribonucleoprotein complex responsible for the synthesis of proteins in the cell. The small ribosomal subunit (SSU) binds messenger RNAs (mRNAs) and translates the encoded message by selecting cognate aminoacyl-transfer RNA (tRNA) molecules. The large subunit (LSU) contains the ribosomal catalytic site termed the peptidyl transferase center (PTC), which catalyzes the formation of peptide bonds, thereby polymerizing the amino acids delivered by tRNAs into a polypeptide chain. The nascent polypeptides leave the ribosome through a tunnel in the LSU and interact with protein factors that function in enzymatic processing, targeting, and the membrane insertion of nascent chains at the exit of the ribosomal tunnel. The polypeptide is Large ribosomal subunit protein eL15B (Saccharomyces cerevisiae (strain ATCC 204508 / S288c) (Baker's yeast)).